A 236-amino-acid chain; its full sequence is MTPRLFALIPCAGTGSRSGSAVPKQYRTLAGRALLHYTLAAFDACTEFAQTLVVLAPDDSHFDARRFAGLRFAVRRCGGGSRQASVLNGLLELAEFGATDHDWVLVHDAARPGITPELIRTLVATLKDDPVGGIVALPVADTLKRVPAGGDAIARTESRDALWQAQTPQMFRIGMLREAILRAQREGHDLTDEASAIEWAGHTPRVVQGSLRNFKVTYPEDFALAEAILARPANAS.

The protein belongs to the IspD/TarI cytidylyltransferase family. IspD subfamily.

It catalyses the reaction 2-C-methyl-D-erythritol 4-phosphate + CTP + H(+) = 4-CDP-2-C-methyl-D-erythritol + diphosphate. Its pathway is isoprenoid biosynthesis; isopentenyl diphosphate biosynthesis via DXP pathway; isopentenyl diphosphate from 1-deoxy-D-xylulose 5-phosphate: step 2/6. In terms of biological role, catalyzes the formation of 4-diphosphocytidyl-2-C-methyl-D-erythritol from CTP and 2-C-methyl-D-erythritol 4-phosphate (MEP). In Burkholderia cenocepacia (strain ATCC BAA-245 / DSM 16553 / LMG 16656 / NCTC 13227 / J2315 / CF5610) (Burkholderia cepacia (strain J2315)), this protein is 2-C-methyl-D-erythritol 4-phosphate cytidylyltransferase.